A 126-amino-acid polypeptide reads, in one-letter code: UPF0102 protein Mlg_2205 (126 aa).

The protein belongs to the UPF0102 family.

The sequence is that of UPF0102 protein Mlg_2205 from Alkalilimnicola ehrlichii (strain ATCC BAA-1101 / DSM 17681 / MLHE-1).